Reading from the N-terminus, the 617-residue chain is MALLQIAEPGQSSAPHEHKRAAGIDLGTTNSLVASVRSGTADTLKDAQGRSLLPSIVNYANEEAIVGYEAKALSESQPQDTIISVKRLLGRSLTDIQTRYPSLPYRFKASENGLPVLQTTQGDKNPIEVSADILKVLAKRAEESLGGELSGVVITVPAYFDDAQRAGTKDAAKLAGLHVLRLLNEPTAAAIAYGLDSGQEGVIAVYDLGGGTFDISILRLSKGVFEVLATGGDSALGGDDFDHLLADFLAEQAGLETPLSAEKNRTLLNIATATKIAFSEQDSVEVEVFGWKGVVTREQFEELIRPLVKKTLMSCRRALKDADVEADEVLEVVMVGGSTRTLLVREMVGEFFGRTPLTNINPDEVVAIGAGIQADILAGNKPDSEMLLLDVIPLSLGIETMGGLVEKIIPRNTTIPVARAQEFTTFKDGQTAMSVHIVQGEREMVDDCRSLARFSLKGIPPMAAGAAHIRVTYQVDADGLLSVTAMEKSTGVQSEIQVKPSYGLSDDEVANMLRDSMTYAKEDMQARALAEQRVEADRVIEGLIAAMQADGDELLSEAEKATLLQAIESLIELRNGNEANAIEQGIKDTDKASQDFASRRMDKSIRAALAGQSIDTI.

The protein belongs to the heat shock protein 70 family.

In terms of biological role, probable chaperone. Has a low intrinsic ATPase activity which is markedly stimulated by HscB. The polypeptide is Chaperone protein HscA homolog (Vibrio vulnificus (strain CMCP6)).